The following is a 179-amino-acid chain: Arginine repressor (179 aa).

It belongs to the ArgR family.

Its subcellular location is the cytoplasm. The protein operates within amino-acid biosynthesis; L-arginine biosynthesis [regulation]. Functionally, regulates arginine biosynthesis genes. The protein is Arginine repressor of Renibacterium salmoninarum (strain ATCC 33209 / DSM 20767 / JCM 11484 / NBRC 15589 / NCIMB 2235).